We begin with the raw amino-acid sequence, 79 residues long: ATP synthase subunit c (79 aa).

The next 2 membrane-spanning stretches (helical) occupy residues 10 to 30 (IAGALMMGLGALGAAVGIGVL) and 52 to 72 (FFIVMGLVDAVPMIAVGLAMY).

This sequence belongs to the ATPase C chain family. In terms of assembly, F-type ATPases have 2 components, F(1) - the catalytic core - and F(0) - the membrane proton channel. F(1) has five subunits: alpha(3), beta(3), gamma(1), delta(1), epsilon(1). F(0) has three main subunits: a(1), b(2) and c(10-14). The alpha and beta chains form an alternating ring which encloses part of the gamma chain. F(1) is attached to F(0) by a central stalk formed by the gamma and epsilon chains, while a peripheral stalk is formed by the delta and b chains.

The protein localises to the cell inner membrane. Its function is as follows. F(1)F(0) ATP synthase produces ATP from ADP in the presence of a proton or sodium gradient. F-type ATPases consist of two structural domains, F(1) containing the extramembraneous catalytic core and F(0) containing the membrane proton channel, linked together by a central stalk and a peripheral stalk. During catalysis, ATP synthesis in the catalytic domain of F(1) is coupled via a rotary mechanism of the central stalk subunits to proton translocation. In terms of biological role, key component of the F(0) channel; it plays a direct role in translocation across the membrane. A homomeric c-ring of between 10-14 subunits forms the central stalk rotor element with the F(1) delta and epsilon subunits. In Thiobacillus denitrificans (strain ATCC 25259 / T1), this protein is ATP synthase subunit c.